The primary structure comprises 349 residues: Phenylalanine--tRNA ligase alpha subunit (349 aa).

A Mg(2+)-binding site is contributed by glutamate 259.

This sequence belongs to the class-II aminoacyl-tRNA synthetase family. Phe-tRNA synthetase alpha subunit type 1 subfamily. Tetramer of two alpha and two beta subunits. Mg(2+) is required as a cofactor.

It localises to the cytoplasm. It carries out the reaction tRNA(Phe) + L-phenylalanine + ATP = L-phenylalanyl-tRNA(Phe) + AMP + diphosphate + H(+). This chain is Phenylalanine--tRNA ligase alpha subunit, found in Lactobacillus delbrueckii subsp. bulgaricus (strain ATCC 11842 / DSM 20081 / BCRC 10696 / JCM 1002 / NBRC 13953 / NCIMB 11778 / NCTC 12712 / WDCM 00102 / Lb 14).